We begin with the raw amino-acid sequence, 256 residues long: Acetyl-coenzyme A carboxylase carboxyl transferase subunit alpha (256 aa).

A CoA carboxyltransferase C-terminal domain is found at 1–236 (MTDVSRVLKE…KANLIEQITS (236 aa)).

It belongs to the AccA family. Acetyl-CoA carboxylase is a heterohexamer composed of biotin carboxyl carrier protein (AccB), biotin carboxylase (AccC) and two subunits each of ACCase subunit alpha (AccA) and ACCase subunit beta (AccD).

It is found in the cytoplasm. The enzyme catalyses N(6)-carboxybiotinyl-L-lysyl-[protein] + acetyl-CoA = N(6)-biotinyl-L-lysyl-[protein] + malonyl-CoA. Its pathway is lipid metabolism; malonyl-CoA biosynthesis; malonyl-CoA from acetyl-CoA: step 1/1. Functionally, component of the acetyl coenzyme A carboxylase (ACC) complex. First, biotin carboxylase catalyzes the carboxylation of biotin on its carrier protein (BCCP) and then the CO(2) group is transferred by the carboxyltransferase to acetyl-CoA to form malonyl-CoA. This Streptococcus pyogenes serotype M12 (strain MGAS2096) protein is Acetyl-coenzyme A carboxylase carboxyl transferase subunit alpha.